The sequence spans 309 residues: Ribosomal protein L11 methyltransferase (309 aa).

T160, G181, D203, and N245 together coordinate S-adenosyl-L-methionine.

It belongs to the methyltransferase superfamily. PrmA family.

It is found in the cytoplasm. It catalyses the reaction L-lysyl-[protein] + 3 S-adenosyl-L-methionine = N(6),N(6),N(6)-trimethyl-L-lysyl-[protein] + 3 S-adenosyl-L-homocysteine + 3 H(+). Its function is as follows. Methylates ribosomal protein L11. In Caldanaerobacter subterraneus subsp. tengcongensis (strain DSM 15242 / JCM 11007 / NBRC 100824 / MB4) (Thermoanaerobacter tengcongensis), this protein is Ribosomal protein L11 methyltransferase.